The sequence spans 348 residues: Beta-hexosaminidase (348 aa).

Residues aspartate 64, arginine 72, arginine 138, and 168-169 contribute to the substrate site; that span reads KH. The active-site Proton donor/acceptor is the histidine 181. Residue aspartate 252 is the Nucleophile of the active site.

Belongs to the glycosyl hydrolase 3 family. NagZ subfamily.

It localises to the cytoplasm. It carries out the reaction Hydrolysis of terminal non-reducing N-acetyl-D-hexosamine residues in N-acetyl-beta-D-hexosaminides.. It participates in cell wall biogenesis; peptidoglycan recycling. Its function is as follows. Plays a role in peptidoglycan recycling by cleaving the terminal beta-1,4-linked N-acetylglucosamine (GlcNAc) from peptide-linked peptidoglycan fragments, giving rise to free GlcNAc, anhydro-N-acetylmuramic acid and anhydro-N-acetylmuramic acid-linked peptides. The sequence is that of Beta-hexosaminidase from Alkalilimnicola ehrlichii (strain ATCC BAA-1101 / DSM 17681 / MLHE-1).